The primary structure comprises 457 residues: Argininosuccinate lyase (457 aa).

The protein belongs to the lyase 1 family. Argininosuccinate lyase subfamily.

Its subcellular location is the cytoplasm. It carries out the reaction 2-(N(omega)-L-arginino)succinate = fumarate + L-arginine. It participates in amino-acid biosynthesis; L-arginine biosynthesis; L-arginine from L-ornithine and carbamoyl phosphate: step 3/3. The protein is Argininosuccinate lyase of Exiguobacterium sibiricum (strain DSM 17290 / CCUG 55495 / CIP 109462 / JCM 13490 / 255-15).